The primary structure comprises 662 residues: Probable dolichyl-phosphate-mannose--protein mannosyltransferase 7 (662 aa).

At Met-1–His-26 the chain is on the lumenal side. A helical transmembrane segment spans residues Leu-27–Trp-47. The Cytoplasmic portion of the chain corresponds to Lys-48–Glu-159. The chain crosses the membrane as a helical span at residues Trp-160–Thr-180. Topologically, residues Thr-181–Gly-195 are lumenal. Residues Leu-196–Val-216 form a helical membrane-spanning segment. Residues Arg-217–Lys-235 are Cytoplasmic-facing. Residues Phe-236–Tyr-256 traverse the membrane as a helical segment. Over Ser-257–Thr-482 the chain is Lumenal. The MIR 1 domain occupies Pro-289–Pro-344. An N-linked (GlcNAc...) asparagine glycan is attached at Asn-347. 2 consecutive MIR domains span residues Leu-359 to Ile-418 and Asp-432 to Val-488. Residues Phe-483–Ile-503 form a helical membrane-spanning segment. Residues Gly-504–Ser-565 are Cytoplasmic-facing. The chain crosses the membrane as a helical span at residues Pro-566–Val-586. At Gln-587 to Glu-617 the chain is on the lumenal side. A helical membrane pass occupies residues Cys-618 to Gly-638. Topologically, residues Lys-639 to Lys-662 are cytoplasmic.

The protein belongs to the glycosyltransferase 39 family.

Its subcellular location is the endoplasmic reticulum membrane. The catalysed reaction is a di-trans,poly-cis-dolichyl beta-D-mannosyl phosphate + L-seryl-[protein] = 3-O-(alpha-D-mannosyl)-L-seryl-[protein] + a di-trans,poly-cis-dolichyl phosphate + H(+). It carries out the reaction a di-trans,poly-cis-dolichyl beta-D-mannosyl phosphate + L-threonyl-[protein] = 3-O-(alpha-D-mannosyl)-L-threonyl-[protein] + a di-trans,poly-cis-dolichyl phosphate + H(+). Its pathway is protein modification; protein glycosylation. In terms of biological role, probable protein O-mannosyltransferase involved in O-glycosylation which is essential for cell wall rigidity. Transfers mannose from Dol-P-mannose to Ser or Thr residues on proteins. This is Probable dolichyl-phosphate-mannose--protein mannosyltransferase 7 from Saccharomyces cerevisiae (strain ATCC 204508 / S288c) (Baker's yeast).